A 313-amino-acid polypeptide reads, in one-letter code: Ubiquitin-conjugating enzyme E2 Z (313 aa).

The UBC core domain maps to 58-212 (QCVLRIKRDI…IRHETIRVAV (155 aa)). The active-site Glycyl thioester intermediate is Cys-147. The segment at 283–313 (VREKHRKETVDIDSDSSSSETETDTQGSSNP) is disordered. A compositionally biased stretch (low complexity) spans 297–313 (DSSSSETETDTQGSSNP).

It belongs to the ubiquitin-conjugating enzyme family.

Its subcellular location is the cytoplasm. The protein resides in the nucleus. It carries out the reaction S-ubiquitinyl-[E1 ubiquitin-activating enzyme]-L-cysteine + [E2 ubiquitin-conjugating enzyme]-L-cysteine = [E1 ubiquitin-activating enzyme]-L-cysteine + S-ubiquitinyl-[E2 ubiquitin-conjugating enzyme]-L-cysteine.. It functions in the pathway protein modification; protein ubiquitination. Its function is as follows. Catalyzes the covalent attachment of ubiquitin to other proteins. May be involved in apoptosis regulation. This is Ubiquitin-conjugating enzyme E2 Z (ube2z) from Xenopus tropicalis (Western clawed frog).